Reading from the N-terminus, the 247-residue chain is tRNA (guanine-N(1)-)-methyltransferase (247 aa).

S-adenosyl-L-methionine is bound by residues Gly116 and 135–140 (IGDYVL).

This sequence belongs to the RNA methyltransferase TrmD family. As to quaternary structure, homodimer.

It is found in the cytoplasm. The enzyme catalyses guanosine(37) in tRNA + S-adenosyl-L-methionine = N(1)-methylguanosine(37) in tRNA + S-adenosyl-L-homocysteine + H(+). Specifically methylates guanosine-37 in various tRNAs. This Symbiobacterium thermophilum (strain DSM 24528 / JCM 14929 / IAM 14863 / T) protein is tRNA (guanine-N(1)-)-methyltransferase.